The chain runs to 496 residues: Steroid 21-hydroxylase (496 aa).

Ser109 serves as a coordination point for heme b. Arg232 serves as a coordination point for 17alpha-hydroxyprogesterone. Arg232 serves as a coordination point for progesterone. Heme b contacts are provided by His364, Arg425, and Cys427.

Belongs to the cytochrome P450 family. It depends on heme b as a cofactor.

It is found in the endoplasmic reticulum membrane. Its subcellular location is the microsome membrane. It catalyses the reaction progesterone + reduced [NADPH--hemoprotein reductase] + O2 = 21-hydroxyprogesterone + oxidized [NADPH--hemoprotein reductase] + H2O + H(+). The enzyme catalyses 17alpha-hydroxyprogesterone + reduced [NADPH--hemoprotein reductase] + O2 = 11-deoxycortisol + oxidized [NADPH--hemoprotein reductase] + H2O + H(+). In terms of biological role, a cytochrome P450 monooxygenase that plays a major role in adrenal steroidogenesis. Catalyzes the hydroxylation at C-21 of progesterone and 17alpha-hydroxyprogesterone to respectively form 11-deoxycorticosterone and 11-deoxycortisol, intermediate metabolites in the biosynthetic pathway of mineralocorticoids and glucocorticoids. Mechanistically, uses molecular oxygen inserting one oxygen atom into a substrate, and reducing the second into a water molecule, with two electrons provided by NADPH via cytochrome P450 reductase (CPR; NADPH-ferrihemoprotein reductase). In Bos taurus (Bovine), this protein is Steroid 21-hydroxylase (CYP21).